Consider the following 578-residue polypeptide: Longifolene synthase (578 aa).

3 residues coordinate Mg(2+): aspartate 331, aspartate 335, and aspartate 475. The DDXXD motif signature appears at aspartate 331–aspartate 335.

Belongs to the terpene synthase family. Tpsd subfamily. Mg(2+) is required as a cofactor. The cofactor is Mn(2+).

It is found in the cytoplasm. It catalyses the reaction (2E,6E)-farnesyl diphosphate = longifolene + diphosphate. The protein operates within sesquiterpene biosynthesis. Its pathway is terpene metabolism; oleoresin biosynthesis. Functionally, involved in defensive oleoresin formation in conifers in response to insect attack or other injury. Involved in sesquiterpene (C15) olefins biosynthesis. Produces mainly longifolene, but also multiple minor products including alpha-longipinene, alpha-longicyclene, E-beta-farnesene, longiborneol, cyclosativene, beta-longipinene, and 12 other sesquiterpenes when used with farnesyl diphosphate (FPP) as substrate. The sequence is that of Longifolene synthase (TPS-Lon) from Picea abies (Norway spruce).